The primary structure comprises 232 residues: Adenosylcobinamide-GDP ribazoletransferase (232 aa).

Transmembrane regions (helical) follow at residues 24–44 (LWAF…ILYL), 46–66 (IPLA…LLHL), 96–116 (IAGV…LSML), 117–137 (PFYA…LGLA), 153–173 (GMNG…YLPV), 174–194 (VIYD…WYVI), and 210–230 (GAMA…SLCF).

This sequence belongs to the CobS family. Mg(2+) is required as a cofactor.

The protein localises to the cell membrane. It carries out the reaction alpha-ribazole + adenosylcob(III)inamide-GDP = adenosylcob(III)alamin + GMP + H(+). It catalyses the reaction alpha-ribazole 5'-phosphate + adenosylcob(III)inamide-GDP = adenosylcob(III)alamin 5'-phosphate + GMP + H(+). It functions in the pathway cofactor biosynthesis; adenosylcobalamin biosynthesis; adenosylcobalamin from cob(II)yrinate a,c-diamide: step 7/7. Joins adenosylcobinamide-GDP and alpha-ribazole to generate adenosylcobalamin (Ado-cobalamin). Also synthesizes adenosylcobalamin 5'-phosphate from adenosylcobinamide-GDP and alpha-ribazole 5'-phosphate. The polypeptide is Adenosylcobinamide-GDP ribazoletransferase (Pyrococcus abyssi (strain GE5 / Orsay)).